The following is a 232-amino-acid chain: Phosphatidylserine decarboxylase proenzyme (232 aa).

Catalysis depends on Ser-190, which acts as the Schiff-base intermediate with substrate; via pyruvic acid. Ser-190 carries the post-translational modification Pyruvic acid (Ser); by autocatalysis.

It belongs to the phosphatidylserine decarboxylase family. PSD-A subfamily. In terms of assembly, heterodimer of a large membrane-associated beta subunit and a small pyruvoyl-containing alpha subunit. Pyruvate serves as cofactor. Post-translationally, is synthesized initially as an inactive proenzyme. Formation of the active enzyme involves a self-maturation process in which the active site pyruvoyl group is generated from an internal serine residue via an autocatalytic post-translational modification. Two non-identical subunits are generated from the proenzyme in this reaction, and the pyruvate is formed at the N-terminus of the alpha chain, which is derived from the carboxyl end of the proenzyme. The post-translation cleavage follows an unusual pathway, termed non-hydrolytic serinolysis, in which the side chain hydroxyl group of the serine supplies its oxygen atom to form the C-terminus of the beta chain, while the remainder of the serine residue undergoes an oxidative deamination to produce ammonia and the pyruvoyl prosthetic group on the alpha chain.

It localises to the cell membrane. The catalysed reaction is a 1,2-diacyl-sn-glycero-3-phospho-L-serine + H(+) = a 1,2-diacyl-sn-glycero-3-phosphoethanolamine + CO2. It functions in the pathway phospholipid metabolism; phosphatidylethanolamine biosynthesis; phosphatidylethanolamine from CDP-diacylglycerol: step 2/2. Catalyzes the formation of phosphatidylethanolamine (PtdEtn) from phosphatidylserine (PtdSer). This is Phosphatidylserine decarboxylase proenzyme from Brucella anthropi (strain ATCC 49188 / DSM 6882 / CCUG 24695 / JCM 21032 / LMG 3331 / NBRC 15819 / NCTC 12168 / Alc 37) (Ochrobactrum anthropi).